Consider the following 216-residue polypeptide: MDLGICKRCGEFEGSCECGKGEVLLKSEDRKKVSKFLSGLLRHFGRDFGVRLDEDGWAELRDVLKILSERYGVGRKHVELIVKFDPKGRFELKNGRIRAKYGHSVEVRTDWSEGGEIPEKLYHATSPENLNSILKTGLLPMRRREVHMCSSPQEAIEVGKRHSSNPVLLEIDAKGLMQDGIEVRRKGKVYTVDFVPPKFIRVLSFDPRSPNPAKGY.

Belongs to the KptA/TPT1 family.

Its function is as follows. Removes the 2'-phosphate from RNA via an intermediate in which the phosphate is ADP-ribosylated by NAD followed by a presumed transesterification to release the RNA and generate ADP-ribose 1''-2''-cyclic phosphate (APPR&gt;P). May function as an ADP-ribosylase. The protein is Probable RNA 2'-phosphotransferase 2 (kptA2) of Archaeoglobus fulgidus (strain ATCC 49558 / DSM 4304 / JCM 9628 / NBRC 100126 / VC-16).